We begin with the raw amino-acid sequence, 970 residues long: Villin-3 (970 aa).

Gelsolin-like repeat units follow at residues 31–111 (AVPV…ERFL), 151–219 (TVHV…EDGK), 273–339 (VLTR…TVIF), 416–484 (KFYS…PAEF), 536–576 (AIQV…QELA), and 643–714 (NFTQ…PQFF). Residues 741–908 (DGVKPKLDKP…EGQPENEEGL (168 aa)) are disordered. Residues 755–778 (TTSSSHTGRSSVPEKSQRSRSMSF) are compositionally biased toward polar residues. Over residues 833–842 (AASIAAISAS) the composition is skewed to low complexity. Positions 878–893 (KDSTPSKDSPTVTPTI) are enriched in polar residues. One can recognise an HP domain in the interval 905–970 (EEGLPVYPYE…NRLKIALQLF (66 aa)).

Belongs to the villin/gelsolin family. Expressed in roots, young leaves, and inflorescences, mostly in the vasculature of roots, leaves, and filaments of the anthers and in epidermal cells of the elongation zone and root hairs. Also detected in guard cells.

The protein resides in the cytoplasm. The protein localises to the cytoskeleton. Functionally, ca(2+)-regulated actin-binding protein. Binds actin microfilaments (MFs). Involved in actin filament bundling, severing and capping. Caps the barbed end of actin filaments and is able to sever them in a calcium-dependent manner. MF severing is promoted by VLN1. The chain is Villin-3 from Oryza sativa subsp. japonica (Rice).